Here is a 2748-residue protein sequence, read N- to C-terminus: MSHNNRHKKNNDKDSSAGQYANSIDNSLSQESVSTNGVTRMANLKADECGSGDEGDKTKRFSISSILSKRETKDVLPEFAGSSSHNGVLTANSSKDMNFTLELSENLLVECRKLQSSNEAKNEQIKSLKQIKESLSDKIEELTNQKKSFMKELDSTKDLNWDLESKLTNLSMECRQLKELKKKTEKSWNDEKESLKLLKTDLEILTLTKNGMENDLSSQKLHYDKEISELKERILDLNNENDRLLISVSDLTSEINSLQSNRTERIKIQKQLDDAKASISSLKRKVQKKYYQKQHTSDTTVTSDPDSEGTTSEEDIFDIVIEIDHMIETGPSVEDISEDLVKKYSEKNNMILLSNDSYKNLLQKSESASKPKDDELMTKEVAENLNMIALPNDDNYSKKEFSLESHIKYLEASGYKVLPLEEFENLNESLSNPSYNYLKEKLQALKKIPIDQSTFNLLKEPTIDFLLPLTSKIDCLIIPTKDYNDLFESVKNPSIEQMKKCLEAKNDLQSNICKWLEERNGCKWLSNDLYFSMVNKIETPSKQYLSDKAKEYDQVLIDTKALEGLKNPTIDFLREKASASDYLLLKKEDYVSPSLEYLVEHAKATNHHLLSDSAYEDLVKCKENPDMEFLKEKSAKLGHTVVSNEAYSELEKKLEQPSLEYLVEHAKATNHHLLSDSAYEDLVKCKENPDMEFLKEKSAKLGHTVVSNEAYSELQRKYSELEKEVEQPSLAYLVEHAKATDHHLLSDSAYEDLVKCKENPDVEFLKEKSAKLGHTVVSSEEYSELQRKYSELEKEVEQPSLAYLVEHAKATDHHLLSDSAYEELVKCKENPDMEFLKEKSAKLGHTVVSNEAYSELEKKLEQPSLAYLVEHAKATDHHLLSDSAYEDLVKCKENSDVEFLKEKSAKLGHTVVSNEAYSELEKKLEQPSLAYLVEHAKATDHHLLSDSAYEDLVKCKENPDMEFLKEKSAKLGHTVVSNEAYSELEKKLEQPSLEYLVEHAKATNHHLLSDSAYEDLVKCKENPDMEFLKEKSAKLGHTVVSNEAYSELEKKLEQPSLEYLVEHAKATNHHLLSDSAYEELVKCKENPDVEFLKEKSAKLGHTVVSNEAYSELEKKLEQPSLEYLVEHAKATNHHLLSDSAYEELVKCKENPDVEFLKEKSAKLGHTVVSNEAYSELEKKLEQPSLAYLVEHAKATDHHLLSDSAYEDLVKCKENPDVEFLKEKSAKLGHTVVSNEAYSELEKKLEQPSLAYLVEHAKATDHHLLSDSAYEDLVKCKENPDMEFLKEKSAKLGHTVVSNEAYSELEKKLEQPSLEYLVEHAKATNHHLLSDSAYEDLVKCKENPDMEFLKEKSAKLGHTVVSNKEYSELEKKLEQPSLEYLVKHAEQIQSKIISISDFNTLANPSMEDMASKLQKLEYQIVSNDEYIALKNTMEKPDVELLRSKLKGYHIIDTTTYNELVSNFNSPTLKFIEEKAKSKGYRLIEPNEYLDLNRIATTPSKEEIDNFCKQIGCYALDSKEYERLKNSLENPSKKFIEENAALLDLVLVDKTEYQAMKDNASNKKSLIPSTKALDFVTMPAPQLASAEKSSLQKRTLSDIENELKALGYVAIRKENLPNLEKPIVDNASKNDVLNLCSKFSLVPLSTEEYDNMRKEHTKILNILGDPSIDFLKEKCEKYQMLIISKHDYEEKQEAIENPGYEFILEKASALGYELVSEVELDRMKQMIDSPDIDYMQEKAARNEMVLLRNEEKEALQKKIEYPSLTFLIEKAAGMNKILVDQIEYDETIRKCNHPTRMELEESCHHLNLVLLDQNEYSTLREPLENRNVEDLINTLSKLNYIAIPNTIYQDLIGKYENPNFDYLKDSLNKMDYVAISRQDYELMVAKYEKPQLDYLKISSEKIDHIVVPLSEYNLMVTNYRNPSLSYLKEKAVLNNHILIKEDDYKNILAVSEHPTVIHLSEKASLLNKVLVDKDDFATMSRSIEKPTIDFLSTKALSMGKILVNESTHKRNEKLLSEPDSEFLTMKAKEQGLIIISEKEYSELRDQIDRPSLDVLKEKAAIFDSIIVENIEYQQLVNTTSPCPPITYEDLKVYAHQFGMELCLQKPNKLSGAERAERIDEQSINTTSSNSTTTSSMFTDALDDNIEELNRVELQNNEDYTDIISKSSTVKDATIFIPAYENIKNSAEKLGYKLVPFEKSNINLKNIEAPLFSKDNDDTSVASSIDLDHLSRKAEKYGMTLISDQEFEEYHILKDNAVNLNGGMEEMNNPLSENQNLAAKTTNTAQEGAFQNTVPHNDMDNEEVEYGPDDPTFTVRQLKKPAGDRNLILTSREKTLLSRDDNIMSQNEAVYGDDISDSFVDESQEIKNDVDIIKTQAMKYGMLCIPESNFVGASYASAQDMSDIVVLSASYYHNLMSPEDMKWNCVSNEELQAEVKKRGLQIALTTKEDKKGQATASKHEYVSHKLNNKTSTVSTKSGAKKGLAEAAATTAYEDSESHPQIEEQSHRTNHHKHHKRQQSLNSNSTSKTTHSSRNTPASRRDIVASFMSRAGSASRTASLQTLASLNEPSIIPALTQTVIGEYLFKYYPRLGPFGFESRHERFFWVHPYTLTLYWSASNPILENPANTKTKGVAILGVESVTDPNPYPTGLYHKSIVVTTETRTIKFTCPTRQRHNIWYNSLRYLLQRNMQGISLEDIADDPTDNMYSGKIFPLPGENTKSSSKRLSASRRSVSTRSLRHRVPQSRSFGNLR.

The segment covering 1–10 has biased composition (basic residues); the sequence is MSHNNRHKKN. Disordered stretches follow at residues 1–36 and 290–312; these read MSHN…VSTN and YYQK…GTTS. A compositionally biased stretch (polar residues) spans 17-36; sequence AGQYANSIDNSLSQESVSTN. The span at 293-304 shows a compositional bias: low complexity; the sequence is KQHTSDTTVTSD. 12 repeat units span residues 593–656, 657–727, 728–798, 799–862, 863–926, 927–990, 991–1054, 1055–1118, 1119–1182, 1183–1246, 1247–1310, and 1311–1374. The interval 593 to 1384 is 13 X tandem repeats; sequence PSLEYLVEHA…PSLEYLVKHA (792 aa). Residues Ser611, Ser675, and Ser746 each carry the phosphoserine modification. A phosphoserine mark is found at Ser881, Ser945, and Ser1009. Phosphoserine occurs at positions 1201, 1265, and 1329. The stretch at 1375–1384 is one 13; truncated repeat; that stretch reads PSLEYLVKHA. Positions 2111–2133 are disordered; sequence ERAERIDEQSINTTSSNSTTTSS. Residues 2122-2133 show a composition bias toward low complexity; sequence NTTSSNSTTTSS. Residues Ser2162, Ser2164, Ser2197, Ser2217, Ser2220, Ser2221, Ser2360, and Ser2424 each carry the phosphoserine modification. Residues 2444 to 2460 are compositionally biased toward basic and acidic residues; the sequence is KEDKKGQATASKHEYVS. Residues 2444–2536 are disordered; sequence KEDKKGQATA…HSSRNTPASR (93 aa). Positions 2465 to 2474 are enriched in polar residues; sequence NKTSTVSTKS. Residues 2492 to 2503 show a composition bias toward basic and acidic residues; that stretch reads SESHPQIEEQSH. Position 2494 is a phosphoserine (Ser2494). Over residues 2504–2514 the composition is skewed to basic residues; the sequence is RTNHHKHHKRQ. The segment covering 2516-2532 has biased composition (low complexity); sequence SLNSNSTSKTTHSSRNT. The residue at position 2545 (Ser2545) is a Phosphoserine. Residues 2573 to 2683 form the PH domain; sequence QTVIGEYLFK…WYNSLRYLLQ (111 aa). The interval 2707–2748 is disordered; sequence IFPLPGENTKSSSKRLSASRRSVSTRSLRHRVPQSRSFGNLR. A compositionally biased stretch (low complexity) spans 2720 to 2730; the sequence is KRLSASRRSVS.

As to quaternary structure, interacts with PAC11 when DYN1 is present, and TUB3.

It is found in the bud tip. Functionally, controls nuclear migration. NUM1 specifically controls the interaction of the bud neck cytoskeleton with the pre-divisional G2 nucleus. Functions in dynein-anchoring. During late anaphase forms dynein-interacting cortical microtubule capture sites at both cellular poles. This leads to dynein-dependent sliding of the microtubules in the bud. The polypeptide is Nuclear migration protein NUM1 (NUM1) (Saccharomyces cerevisiae (strain ATCC 204508 / S288c) (Baker's yeast)).